A 220-amino-acid polypeptide reads, in one-letter code: Sec-independent protein translocase protein TatB (220 aa).

The chain crosses the membrane as a helical span at residues 1–21 (MFDIGFSELLLVLVIGLVVLG). Residues 192-220 (KQQIDTIDSHGTDLSSAGPSRIHQPGGDQ) are disordered.

Belongs to the TatB family. As to quaternary structure, the Tat system comprises two distinct complexes: a TatABC complex, containing multiple copies of TatA, TatB and TatC subunits, and a separate TatA complex, containing only TatA subunits. Substrates initially bind to the TatABC complex, which probably triggers association of the separate TatA complex to form the active translocon.

It localises to the cell inner membrane. Part of the twin-arginine translocation (Tat) system that transports large folded proteins containing a characteristic twin-arginine motif in their signal peptide across membranes. Together with TatC, TatB is part of a receptor directly interacting with Tat signal peptides. TatB may form an oligomeric binding site that transiently accommodates folded Tat precursor proteins before their translocation. This is Sec-independent protein translocase protein TatB from Yersinia pestis bv. Antiqua (strain Antiqua).